The sequence spans 315 residues: 3-chlorobenzoate-3,4-dioxygenase reductase subunit (315 aa).

1 to 103 is a binding site for FMN; that stretch reads MVAIDQHDTY…GATTRISAPR (103 aa). An FAD-binding FR-type domain is found at 7–109; it reads HDTYSVRVIS…SAPRNAFALD (103 aa). The region spanning 228 to 315 is the 2Fe-2S ferredoxin-type domain; it reads NEFTVNLARS…ALSPELTLDL (88 aa). Positions 264, 269, 272, and 302 each coordinate [2Fe-2S] cluster.

Belongs to the PDR/VanB family. As to quaternary structure, this dioxygenase system consists of two proteins: phthalate oxygenase and phthalate oxygenase reductase. FMN is required as a cofactor.

The protein is 3-chlorobenzoate-3,4-dioxygenase reductase subunit (cbaB) of Comamonas testosteroni (Pseudomonas testosteroni).